We begin with the raw amino-acid sequence, 353 residues long: MSLMFDVDAAVYPFPAKPIRLSSDEKLAYRTKIKRLLQERDAVMVAHYYTDPDIQALAEETGGCVADSLEMARFGSQHSAATLLVAGVRFMGETAKILSPEKTILMPTLQAECSLDLGCPIDEFSRFCDAHPDRTVVVYANTSAAVKARADWVVTSSIAVELIEHLDSLGEKIIWAPDRHLGQYVQRQTSADILCWQSACIVHDEFKTQALQRMKLLYPEAAVLVHPESPQAIVDLADAVGSTSQLIQAAQTLPHRQMIVATDRGIFYKMQQACPDKELLEAPTAGEGATCRSCAHCPWMAMNGLKAIADGLEQGGSEHEILINDALREGALIPLNRMLTFAKDLKLKVRGNA.

Iminosuccinate contacts are provided by His47 and Ser68. Cys113 provides a ligand contact to [4Fe-4S] cluster. Iminosuccinate is bound by residues Tyr139–Asn141 and Ser156. Cys200 is a binding site for [4Fe-4S] cluster. Iminosuccinate contacts are provided by residues His226–Glu228 and Thr243. Cys297 contacts [4Fe-4S] cluster.

The protein belongs to the quinolinate synthase family. Type 1 subfamily. It depends on [4Fe-4S] cluster as a cofactor.

Its subcellular location is the cytoplasm. The enzyme catalyses iminosuccinate + dihydroxyacetone phosphate = quinolinate + phosphate + 2 H2O + H(+). The protein operates within cofactor biosynthesis; NAD(+) biosynthesis; quinolinate from iminoaspartate: step 1/1. Catalyzes the condensation of iminoaspartate with dihydroxyacetone phosphate to form quinolinate. This Erwinia tasmaniensis (strain DSM 17950 / CFBP 7177 / CIP 109463 / NCPPB 4357 / Et1/99) protein is Quinolinate synthase.